Consider the following 193-residue polypeptide: Acyl carrier protein phosphodiesterase (193 aa).

The protein belongs to the AcpH family.

The enzyme catalyses holo-[ACP] + H2O = apo-[ACP] + (R)-4'-phosphopantetheine + H(+). Functionally, converts holo-ACP to apo-ACP by hydrolytic cleavage of the phosphopantetheine prosthetic group from ACP. This is Acyl carrier protein phosphodiesterase from Escherichia coli O7:K1 (strain IAI39 / ExPEC).